A 279-amino-acid chain; its full sequence is Oxygen-dependent coproporphyrinogen-III oxidase (279 aa).

Position 102 (serine 102) interacts with substrate. Histidine 106 and histidine 116 together coordinate a divalent metal cation. Catalysis depends on histidine 116, which acts as the Proton donor. 118 to 120 is a binding site for substrate; the sequence is NTR. A divalent metal cation contacts are provided by histidine 149 and histidine 179. An important for dimerization region spans residues 244-279; the sequence is YVEFNLLYDRGTKFGLMTDGNVEAILMSLPPEVKFN.

It belongs to the aerobic coproporphyrinogen-III oxidase family. Homodimer. Requires a divalent metal cation as cofactor.

Its subcellular location is the cytoplasm. The enzyme catalyses coproporphyrinogen III + O2 + 2 H(+) = protoporphyrinogen IX + 2 CO2 + 2 H2O. Its pathway is porphyrin-containing compound metabolism; protoporphyrin-IX biosynthesis; protoporphyrinogen-IX from coproporphyrinogen-III (O2 route): step 1/1. Its function is as follows. Involved in the heme biosynthesis. Catalyzes the aerobic oxidative decarboxylation of propionate groups of rings A and B of coproporphyrinogen-III to yield the vinyl groups in protoporphyrinogen-IX. This chain is Oxygen-dependent coproporphyrinogen-III oxidase, found in Rickettsia peacockii (strain Rustic).